Reading from the N-terminus, the 157-residue chain is Transcription elongation factor GreA (157 aa).

It belongs to the GreA/GreB family.

Its function is as follows. Necessary for efficient RNA polymerase transcription elongation past template-encoded arresting sites. The arresting sites in DNA have the property of trapping a certain fraction of elongating RNA polymerases that pass through, resulting in locked ternary complexes. Cleavage of the nascent transcript by cleavage factors such as GreA or GreB allows the resumption of elongation from the new 3'terminus. GreA releases sequences of 2 to 3 nucleotides. The polypeptide is Transcription elongation factor GreA (Bartonella tribocorum (strain CIP 105476 / IBS 506)).